A 354-amino-acid chain; its full sequence is Methylthioribose-1-phosphate isomerase (354 aa).

Substrate is bound by residues 58 to 60 (RGA), Arg101, and Gln204. The active-site Proton donor is the Asp245. Residue 255-256 (NK) coordinates substrate.

The protein belongs to the eIF-2B alpha/beta/delta subunits family. MtnA subfamily.

It carries out the reaction 5-(methylsulfanyl)-alpha-D-ribose 1-phosphate = 5-(methylsulfanyl)-D-ribulose 1-phosphate. The protein operates within amino-acid biosynthesis; L-methionine biosynthesis via salvage pathway; L-methionine from S-methyl-5-thio-alpha-D-ribose 1-phosphate: step 1/6. Functionally, catalyzes the interconversion of methylthioribose-1-phosphate (MTR-1-P) into methylthioribulose-1-phosphate (MTRu-1-P). The sequence is that of Methylthioribose-1-phosphate isomerase from Xanthomonas oryzae pv. oryzae (strain MAFF 311018).